Consider the following 167-residue polypeptide: uncharacterized protein (167 aa).

This is an uncharacterized protein from Aquifex aeolicus (strain VF5).